The chain runs to 39 residues: Large ribosomal subunit protein bL36 (39 aa).

The protein belongs to the bacterial ribosomal protein bL36 family.

In Lactiplantibacillus plantarum (strain ATCC BAA-793 / NCIMB 8826 / WCFS1) (Lactobacillus plantarum), this protein is Large ribosomal subunit protein bL36.